Consider the following 396-residue polypeptide: Probable glucan endo-1,6-beta-glucosidase B (396 aa).

A signal peptide spans 1–17; the sequence is MIRRLAAFSALSGLATA. Asn-30 carries an N-linked (GlcNAc...) asparagine glycan. Glu-219 (proton donor) is an active-site residue. Asn-272 is a glycosylation site (N-linked (GlcNAc...) asparagine). Glu-320 (nucleophile) is an active-site residue.

This sequence belongs to the glycosyl hydrolase 5 (cellulase A) family.

The protein localises to the secreted. The enzyme catalyses Random hydrolysis of (1-&gt;6)-linkages in (1-&gt;6)-beta-D-glucans.. Beta-glucanases participate in the metabolism of beta-glucan, the main structural component of the cell wall. Acts on lutean, pustulan and 1,6-oligo-beta-D-glucosides. The polypeptide is Probable glucan endo-1,6-beta-glucosidase B (exgB) (Aspergillus fumigatus (strain ATCC MYA-4609 / CBS 101355 / FGSC A1100 / Af293) (Neosartorya fumigata)).